The chain runs to 201 residues: Adenylyl-sulfate kinase (201 aa).

35-42 contacts ATP; sequence GLSGSGKS. Catalysis depends on serine 109, which acts as the Phosphoserine intermediate.

The protein belongs to the APS kinase family.

The catalysed reaction is adenosine 5'-phosphosulfate + ATP = 3'-phosphoadenylyl sulfate + ADP + H(+). The protein operates within sulfur metabolism; hydrogen sulfide biosynthesis; sulfite from sulfate: step 2/3. Its function is as follows. Catalyzes the synthesis of activated sulfate. The sequence is that of Adenylyl-sulfate kinase from Erwinia tasmaniensis (strain DSM 17950 / CFBP 7177 / CIP 109463 / NCPPB 4357 / Et1/99).